A 369-amino-acid polypeptide reads, in one-letter code: Deacetylase EF_0837 (369 aa).

Zn(2+) contacts are provided by histidine 58, histidine 60, lysine 152, histidine 186, histidine 209, and aspartate 270. Lysine 152 is modified (N6-carboxylysine).

It belongs to the metallo-dependent hydrolases superfamily. Atu3266/EF_0837 deacetylase family. It depends on Zn(2+) as a cofactor.

Esterase that can catalyze the deacetylation of acetyl-(R)-mandelate, but with very low efficiency (in vitro). This chain is Deacetylase EF_0837, found in Enterococcus faecalis (strain ATCC 700802 / V583).